We begin with the raw amino-acid sequence, 351 residues long: Muscleblind-like protein 2a (351 aa).

C3H1-type zinc fingers lie at residues 13–41, 47–73, 177–205, and 213–239; these read WLTL…HPPK, NGRV…HPPA, TDKL…HPSD, and DNTV…HPPA.

Belongs to the muscleblind family. As to expression, expressed in fast and slow myotomal muscle, heart, liver, skin, brain and testis.

The protein localises to the nucleus. It is found in the cytoplasm. Involved in pre-mRNA alternative splicing regulation. RNA-binding protein that binds to 5'ACACCC-3' core sequence. This chain is Muscleblind-like protein 2a (mbnl2a), found in Takifugu rubripes (Japanese pufferfish).